Consider the following 488-residue polypeptide: Annexin A7 (488 aa).

Residues methionine 1 to proline 18 are compositionally biased toward pro residues. Disordered stretches follow at residues methionine 1–valine 49 and glycine 71–serine 150. The repeat-rich region stretch occupies residues methionine 1–proline 143. Residues glycine 5–alanine 20 are 3 X 5 AA tandem repeats of G-Y-P-P-X. The segment covering proline 89–phenylalanine 102 has biased composition (gly residues). Annexin repeat units follow at residues phenylalanine 185–methionine 256, proline 257–glutamine 328, glutamine 340–glutamine 412, and asparagine 416–glycine 487. Lysine 233 carries the post-translational modification N6-acetyllysine.

The protein belongs to the annexin family. In terms of assembly, interacts with PDCD6.

Functionally, calcium/phospholipid-binding protein which promotes membrane fusion and is involved in exocytosis. This Macaca fascicularis (Crab-eating macaque) protein is Annexin A7 (ANXA7).